The sequence spans 451 residues: tRNA modification GTPase MnmE (451 aa).

Residues Arg-37, Glu-95, and Lys-135 each contribute to the (6S)-5-formyl-5,6,7,8-tetrahydrofolate site. The TrmE-type G domain occupies 232–376; that stretch reads GLSIVIMGPP…LVEAIADFAG (145 aa). Residue Asn-242 coordinates K(+). GTP contacts are provided by residues 242-247, 261-267, and 286-289; these read NAGKST, SEIAGTT, and DTAG. Mg(2+) is bound at residue Ser-246. K(+) is bound by residues Ser-261, Ile-263, and Thr-266. Thr-267 contacts Mg(2+). Lys-451 lines the (6S)-5-formyl-5,6,7,8-tetrahydrofolate pocket.

Belongs to the TRAFAC class TrmE-Era-EngA-EngB-Septin-like GTPase superfamily. TrmE GTPase family. In terms of assembly, homodimer. Heterotetramer of two MnmE and two MnmG subunits. Requires K(+) as cofactor.

It is found in the cytoplasm. Functionally, exhibits a very high intrinsic GTPase hydrolysis rate. Involved in the addition of a carboxymethylaminomethyl (cmnm) group at the wobble position (U34) of certain tRNAs, forming tRNA-cmnm(5)s(2)U34. In Beijerinckia indica subsp. indica (strain ATCC 9039 / DSM 1715 / NCIMB 8712), this protein is tRNA modification GTPase MnmE.